A 208-amino-acid polypeptide reads, in one-letter code: Probable molybdenum cofactor guanylyltransferase (208 aa).

GTP is bound by residues 12-14 (IAG), Lys24, Asp72, and Asp101. A Mg(2+)-binding site is contributed by Asp101.

The protein belongs to the MobA family. Mg(2+) serves as cofactor.

It is found in the cytoplasm. The enzyme catalyses Mo-molybdopterin + GTP + H(+) = Mo-molybdopterin guanine dinucleotide + diphosphate. In terms of biological role, transfers a GMP moiety from GTP to Mo-molybdopterin (Mo-MPT) cofactor (Moco or molybdenum cofactor) to form Mo-molybdopterin guanine dinucleotide (Mo-MGD) cofactor. The protein is Probable molybdenum cofactor guanylyltransferase of Chloroflexus aggregans (strain MD-66 / DSM 9485).